Here is a 70-residue protein sequence, read N- to C-terminus: DNA-directed RNA polymerase subunit omega (70 aa).

The protein belongs to the RNA polymerase subunit omega family. The RNAP catalytic core consists of 2 alpha, 1 beta, 1 beta' and 1 omega subunit. When a sigma factor is associated with the core the holoenzyme is formed, which can initiate transcription.

It catalyses the reaction RNA(n) + a ribonucleoside 5'-triphosphate = RNA(n+1) + diphosphate. Its function is as follows. Promotes RNA polymerase assembly. Latches the N- and C-terminal regions of the beta' subunit thereby facilitating its interaction with the beta and alpha subunits. The chain is DNA-directed RNA polymerase subunit omega from Staphylococcus saprophyticus subsp. saprophyticus (strain ATCC 15305 / DSM 20229 / NCIMB 8711 / NCTC 7292 / S-41).